The following is a 34-amino-acid chain: Photosystem II reaction center protein M (34 aa).

A helical transmembrane segment spans residues 5–25 (ILAFIATALFILIPTAFLLII).

It belongs to the PsbM family. In terms of assembly, PSII is composed of 1 copy each of membrane proteins PsbA, PsbB, PsbC, PsbD, PsbE, PsbF, PsbH, PsbI, PsbJ, PsbK, PsbL, PsbM, PsbT, PsbX, PsbY, PsbZ, Psb30/Ycf12, at least 3 peripheral proteins of the oxygen-evolving complex and a large number of cofactors. It forms dimeric complexes.

The protein localises to the plastid. It is found in the chloroplast thylakoid membrane. Functionally, one of the components of the core complex of photosystem II (PSII). PSII is a light-driven water:plastoquinone oxidoreductase that uses light energy to abstract electrons from H(2)O, generating O(2) and a proton gradient subsequently used for ATP formation. It consists of a core antenna complex that captures photons, and an electron transfer chain that converts photonic excitation into a charge separation. This subunit is found at the monomer-monomer interface. This chain is Photosystem II reaction center protein M, found in Agrostis stolonifera (Creeping bentgrass).